The chain runs to 340 residues: tRNA N6-adenosine threonylcarbamoyltransferase (340 aa).

2 residues coordinate Fe cation: His109 and His113. Substrate is bound by residues 132–136 (AISGA), Asp165, Gly178, and Asn277. A Fe cation-binding site is contributed by Asp302.

It belongs to the KAE1 / TsaD family. Requires Fe(2+) as cofactor.

The protein localises to the cytoplasm. It catalyses the reaction L-threonylcarbamoyladenylate + adenosine(37) in tRNA = N(6)-L-threonylcarbamoyladenosine(37) in tRNA + AMP + H(+). Functionally, required for the formation of a threonylcarbamoyl group on adenosine at position 37 (t(6)A37) in tRNAs that read codons beginning with adenine. Is involved in the transfer of the threonylcarbamoyl moiety of threonylcarbamoyl-AMP (TC-AMP) to the N6 group of A37, together with TsaE and TsaB. TsaD likely plays a direct catalytic role in this reaction. This Chlamydia muridarum (strain MoPn / Nigg) protein is tRNA N6-adenosine threonylcarbamoyltransferase.